Reading from the N-terminus, the 466-residue chain is MGKTLYQKLFDAHIVHEAPNETPLLYIDRHLVHEVTSPQAFDGLRAMGRKVRQPGKTFATMDHNVSTQTKDINASGEMARIQMQELIKNCAEFGVQLYDLNHPYQGIVHVIGPEQGMTLPGMTIVCGDSHTATHGAFGSLAFGIGTSEVEHVLATQTLKQGRAKTMKIEVTGDAAHGITAKDIVLAIIGKTGSAGGTGHVVEFCGKAIRALSMEGRMTLCNMAIEMGAKAGLVAPDETTFNYLKGRQFAPKDANWDAAVAYWSTLKSDDDAQFDTIVTLDAAQIAPQVTWGTNPGQVIAVNQEIPNPDSFSDPVERASAAKALAYMDLQPGIKLTDVKIDKVFIGSCTNSRIEDLRAAAEIAKGRKVAAGVQAIVVPGSGPVKTMAELEGLDKVFIEAGFEWRLPGCSMCLAMNNDRLNPGERCASTSNRNFEGRQGRAGRTHLVSPAMAAAAAVTGRFADVRELN.

Residues C347, C407, and C410 each coordinate [4Fe-4S] cluster.

The protein belongs to the aconitase/IPM isomerase family. LeuC type 1 subfamily. Heterodimer of LeuC and LeuD. It depends on [4Fe-4S] cluster as a cofactor.

It carries out the reaction (2R,3S)-3-isopropylmalate = (2S)-2-isopropylmalate. Its pathway is amino-acid biosynthesis; L-leucine biosynthesis; L-leucine from 3-methyl-2-oxobutanoate: step 2/4. In terms of biological role, catalyzes the isomerization between 2-isopropylmalate and 3-isopropylmalate, via the formation of 2-isopropylmaleate. In Pectobacterium atrosepticum (strain SCRI 1043 / ATCC BAA-672) (Erwinia carotovora subsp. atroseptica), this protein is 3-isopropylmalate dehydratase large subunit.